We begin with the raw amino-acid sequence, 339 residues long: uncharacterized protein (339 aa).

A Rhodanese domain is found at 17–111; sequence VRGEIKCLDV…WEDLSLPQNE (95 aa).

This is an uncharacterized protein from Schizosaccharomyces pombe (strain 972 / ATCC 24843) (Fission yeast).